We begin with the raw amino-acid sequence, 387 residues long: N-acetyldiaminopimelate deacetylase (387 aa).

The active site involves D75. E134 functions as the Proton acceptor in the catalytic mechanism.

The protein belongs to the peptidase M20A family. N-acetyldiaminopimelate deacetylase subfamily.

The catalysed reaction is N-acetyl-(2S,6S)-2,6-diaminopimelate + H2O = (2S,6S)-2,6-diaminopimelate + acetate. The protein operates within amino-acid biosynthesis; L-lysine biosynthesis via DAP pathway; LL-2,6-diaminopimelate from (S)-tetrahydrodipicolinate (acetylase route): step 3/3. Functionally, catalyzes the conversion of N-acetyl-diaminopimelate to diaminopimelate and acetate. The protein is N-acetyldiaminopimelate deacetylase of Leuconostoc citreum (strain KM20).